The following is a 284-amino-acid chain: Small ribosomal subunit protein uS5z (284 aa).

Residues 1–19 (MAERGGEGGAERGGDRGDF) show a composition bias toward basic and acidic residues. The segment at 1 to 51 (MAERGGEGGAERGGDRGDFGRGFGGGRGGGRGRDRGPRGRGRRGGRASEET) is disordered. Over residues 20–29 (GRGFGGGRGG) the composition is skewed to gly residues. The region spanning 95 to 158 (LKDEVMKIMP…ILAKLSVVPV (64 aa)) is the S5 DRBM domain.

The protein belongs to the universal ribosomal protein uS5 family.

The polypeptide is Small ribosomal subunit protein uS5z (RPS2A) (Arabidopsis thaliana (Mouse-ear cress)).